The following is a 500-amino-acid chain: Polyenoic fatty acid isomerase (500 aa).

An N-terminal signal peptide occupies residues 1-21; sequence MSLNRVLHIFLIAYLACTALT.

As to quaternary structure, homodimer. An oxidized flavin serves as cofactor. Post-translationally, glycosylated.

The catalysed reaction is (5Z,8Z,11Z,14Z,17Z)-eicosapentaenoate = (5Z,7E,9E,14Z,17Z)-icosapentaenoate. Involved in the biosynthesis of conjugated triene-containing fatty acids. Catalyzes the isomerization of a wide range of substrates containing three or more methylene interrupted olefins into a Z,E,E conjugated triene functionality. May be involved in a stress tolerance mechanism as response to intertidal habitats with direct sunlight, desiccation and high temperature. In vitro substrates include arachidonic acid ((5Z,8Z,11Z,14Z)-eicosatetraenoic acid), EPA ((5Z,8Z, 11Z,14Z,17Z)-eicosapentaenoic acid), DHA ((4Z,7Z,10Z,13Z,16Z,19Z)-docosahexenoic acid), adrenic acid ((7Z,10Z,13Z,16Z)-docosatetraenoic acid), anandamide (arachidonyl-N-ethanolamide) and eicosatrienoic acid ((5Z,8Z,11Z)-eicosatrienoic acid). Gamma-linolenic acid (18:3 6Z,9Z,12Z) and dihomo-gamma-linolenic acid (20:3 8Z,11Z,14Z) are transformed into mixtures of conjugated diene and triene fatty acids, linoleic acid is only transformed to a conjugated diene. The polypeptide is Polyenoic fatty acid isomerase (Ptilota filicina (Red alga)).